A 63-amino-acid chain; its full sequence is 2-hydroxymuconate tautomerase (63 aa).

The Proton acceptor; via imino nitrogen role is filled by Pro-2.

It belongs to the 4-oxalocrotonate tautomerase family. In terms of assembly, homohexamer.

The enzyme catalyses (2Z,4E)-2-hydroxyhexa-2,4-dienedioate = (3E)-2-oxohex-3-enedioate. The protein operates within aromatic compound metabolism; salicylate degradation. In terms of biological role, catalyzes the ketonization of 2-hydroxymuconate stereoselectively to yield 2-oxo-3-hexenedioate. In Comamonas testosteroni (Pseudomonas testosteroni), this protein is 2-hydroxymuconate tautomerase (aphI).